Reading from the N-terminus, the 251-residue chain is Probable transcriptional regulatory protein PMI1113 (251 aa).

It belongs to the TACO1 family.

It localises to the cytoplasm. This Proteus mirabilis (strain HI4320) protein is Probable transcriptional regulatory protein PMI1113.